Reading from the N-terminus, the 290-residue chain is Small ribosomal subunit protein uS2 (290 aa).

The disordered stretch occupies residues Trp-269–Trp-290.

It belongs to the universal ribosomal protein uS2 family. As to quaternary structure, component of the small ribosomal subunit. Mature ribosomes consist of a small (40S) and a large (60S) subunit. The 40S subunit contains about 33 different proteins and 1 molecule of RNA (18S). The 60S subunit contains about 49 different proteins and 3 molecules of RNA (25S, 5.8S and 5S). Interacts with rps21.

The protein resides in the cytoplasm. Required for the assembly and/or stability of the 40S ribosomal subunit. Required for the processing of the 20S rRNA-precursor to mature 18S rRNA in a late step of the maturation of 40S ribosomal subunits. This Talaromyces marneffei (strain ATCC 18224 / CBS 334.59 / QM 7333) (Penicillium marneffei) protein is Small ribosomal subunit protein uS2 (rps0).